Consider the following 161-residue polypeptide: Putative 4-hydroxy-4-methyl-2-oxoglutarate aldolase (161 aa).

Substrate contacts are provided by residues 75–78 (GDNL) and R97. Residue D98 participates in a divalent metal cation binding.

It belongs to the class II aldolase/RraA-like family. As to quaternary structure, homotrimer. Requires a divalent metal cation as cofactor.

It catalyses the reaction 4-hydroxy-4-methyl-2-oxoglutarate = 2 pyruvate. It carries out the reaction oxaloacetate + H(+) = pyruvate + CO2. In terms of biological role, catalyzes the aldol cleavage of 4-hydroxy-4-methyl-2-oxoglutarate (HMG) into 2 molecules of pyruvate. Also contains a secondary oxaloacetate (OAA) decarboxylase activity due to the common pyruvate enolate transition state formed following C-C bond cleavage in the retro-aldol and decarboxylation reactions. The protein is Putative 4-hydroxy-4-methyl-2-oxoglutarate aldolase of Alkalilimnicola ehrlichii (strain ATCC BAA-1101 / DSM 17681 / MLHE-1).